Consider the following 633-residue polypeptide: Keratin, type II cytoskeletal 2 epidermal (633 aa).

The head stretch occupies residues 1–189; it reads MSCQISCKSR…DPEIQNVKSQ (189 aa). Arg-18 bears the Asymmetric dimethylarginine mark. 3 positions are modified to phosphoserine: Ser-21, Ser-24, and Ser-60. Residues 190-225 are coil 1A; that stretch reads EREQIKTLNNKFASFIDKVRFLEQQNQVLQTKWELL. An IF rod domain is found at 190–503; it reads EREQIKTLNN…KLLEGEECRM (314 aa). Residues 226–244 are linker 1; sequence QQLDVSTRTTNLEPIFQAY. The coil 1B stretch occupies residues 245–336; that stretch reads IAKLKKYVDT…FLFDXELSQM (92 aa). Positions 337-360 are linker 12; it reads QTQISETNVTLSMDNNRSLDLDSI. Residues 361–499 are coil 2; it reads ISEVKAQYEE…ATYRKLLEGE (139 aa). Positions 500-633 are tail; that stretch reads ECRMSGDLSS…SGSSVTFSFR (134 aa). The segment covering 518–527 has biased composition (low complexity); that stretch reads SSMSSSMTSR. The interval 518–633 is disordered; sequence SSMSSSMTSR…SGSSVTFSFR (116 aa). Residues 528–613 are compositionally biased toward gly residues; sequence GGFGGYGSGG…GYGSGGGSRG (86 aa). Omega-N-methylarginine is present on residues Arg-588 and Arg-612.

This sequence belongs to the intermediate filament family. Heterotetramer of two type I and two type II keratins. Associates with KRT10.

It localises to the cytoplasm. Probably contributes to terminal cornification. Associated with keratinocyte activation, proliferation and keratinization. Required for maintenance of corneocytes and keratin filaments in suprabasal keratinocytes in the epidermis of the ear, potentially via moderation of expression and localization of keratins and their partner proteins. Plays a role in the establishment of the epidermal barrier on plantar skin. This is Keratin, type II cytoskeletal 2 epidermal (KRT2) from Canis lupus familiaris (Dog).